The chain runs to 246 residues: Acetoacetate decarboxylase (246 aa).

The Schiff-base intermediate with acetoacetate role is filled by Lys-116.

It belongs to the ADC family.

It catalyses the reaction acetoacetate + H(+) = acetone + CO2. In terms of biological role, catalyzes the conversion of acetoacetate to acetone and carbon dioxide. In Clostridium botulinum (strain Eklund 17B / Type B), this protein is Acetoacetate decarboxylase.